A 616-amino-acid chain; its full sequence is Dihydroxy-acid dehydratase (616 aa).

Asp81 serves as a coordination point for Mg(2+). A [2Fe-2S] cluster-binding site is contributed by Cys122. 2 residues coordinate Mg(2+): Asp123 and Lys124. Lys124 bears the N6-carboxylysine mark. Position 195 (Cys195) interacts with [2Fe-2S] cluster. Glu491 serves as a coordination point for Mg(2+). Ser517 serves as the catalytic Proton acceptor.

This sequence belongs to the IlvD/Edd family. In terms of assembly, homodimer. [2Fe-2S] cluster is required as a cofactor. The cofactor is Mg(2+).

The catalysed reaction is (2R)-2,3-dihydroxy-3-methylbutanoate = 3-methyl-2-oxobutanoate + H2O. It carries out the reaction (2R,3R)-2,3-dihydroxy-3-methylpentanoate = (S)-3-methyl-2-oxopentanoate + H2O. It participates in amino-acid biosynthesis; L-isoleucine biosynthesis; L-isoleucine from 2-oxobutanoate: step 3/4. The protein operates within amino-acid biosynthesis; L-valine biosynthesis; L-valine from pyruvate: step 3/4. Functionally, functions in the biosynthesis of branched-chain amino acids. Catalyzes the dehydration of (2R,3R)-2,3-dihydroxy-3-methylpentanoate (2,3-dihydroxy-3-methylvalerate) into 2-oxo-3-methylpentanoate (2-oxo-3-methylvalerate) and of (2R)-2,3-dihydroxy-3-methylbutanoate (2,3-dihydroxyisovalerate) into 2-oxo-3-methylbutanoate (2-oxoisovalerate), the penultimate precursor to L-isoleucine and L-valine, respectively. The sequence is that of Dihydroxy-acid dehydratase from Methylocella silvestris (strain DSM 15510 / CIP 108128 / LMG 27833 / NCIMB 13906 / BL2).